Here is a 132-residue protein sequence, read N- to C-terminus: Transthyretin-like protein 16 (132 aa).

Residues 1-19 (MRSLVVCLLLAACALECTA) form the signal peptide. Asn-23 carries an N-linked (GlcNAc...) asparagine glycan.

Belongs to the nematode transthyretin-like family.

The protein resides in the secreted. The sequence is that of Transthyretin-like protein 16 (ttr-16) from Caenorhabditis elegans.